The following is a 579-amino-acid chain: Transcription factor MTB2 (579 aa).

The disordered stretch occupies residues Gly373–Gln439. Positions Ser382–Val392 are enriched in low complexity. Composition is skewed to basic and acidic residues over residues Glu393 to Arg415 and Asn425 to Gln439. Residues Glu428–Arg441 form a basic motif; degenerate region. One can recognise a bHLH domain in the interval Glu428–Met477. The tract at residues Glu442–Met477 is helix-loop-helix motif.

The protein resides in the nucleus. Its function is as follows. Transcription factor that negatively regulates jasmonate (JA) signaling. Negatively regulates JA-dependent response to wounding, JA-induced expression of defense genes, JA-dependent responses against herbivorous insects, and JA-dependent resistance against Botrytis cinerea infection. Plays a positive role in resistance against the bacterial pathogen Pseudomonas syringae pv tomato DC3000. The polypeptide is Transcription factor MTB2 (Solanum lycopersicum (Tomato)).